Here is a 518-residue protein sequence, read N- to C-terminus: Chromosomal replication initiator protein DnaA (518 aa).

A domain I, interacts with DnaA modulators region spans residues 1 to 76; sequence METDGGDFPS…RALSEAYGSP (76 aa). Residues 76 to 176 are domain II; it reads PIRLAVTVDP…RRPTTRIENS (101 aa). A disordered region spans residues 91–174; the sequence is LTPERTGEHS…QPRRPTTRIE (84 aa). Residues 124–135 show a composition bias toward basic and acidic residues; the sequence is DGLHLDERRSGS. Over residues 136–147 the composition is skewed to acidic residues; sequence LEEDSPLDDSDP. A domain III, AAA+ region region spans residues 177 to 393; it reads RLNPKYIFET…GALIRVTAFA (217 aa). ATP is bound by residues Gly-221, Gly-223, Lys-224, and Thr-225. Residues 394-518 are domain IV, binds dsDNA; that stretch reads SLNRQPVDMQ…TNRIKKQSGA (125 aa).

The protein belongs to the DnaA family. In terms of assembly, oligomerizes as a right-handed, spiral filament on DNA at oriC.

The protein localises to the cytoplasm. Functionally, plays an essential role in the initiation and regulation of chromosomal replication. ATP-DnaA binds to the origin of replication (oriC) to initiate formation of the DNA replication initiation complex once per cell cycle. Binds the DnaA box (a 9 base pair repeat at the origin) and separates the double-stranded (ds)DNA. Forms a right-handed helical filament on oriC DNA; dsDNA binds to the exterior of the filament while single-stranded (ss)DNA is stabiized in the filament's interior. The ATP-DnaA-oriC complex binds and stabilizes one strand of the AT-rich DNA unwinding element (DUE), permitting loading of DNA polymerase. After initiation quickly degrades to an ADP-DnaA complex that is not apt for DNA replication. Binds acidic phospholipids. In Kineococcus radiotolerans (strain ATCC BAA-149 / DSM 14245 / SRS30216), this protein is Chromosomal replication initiator protein DnaA.